The following is a 222-amino-acid chain: Eukaryotic translation initiation factor 3 subunit K (222 aa).

Positions 46 to 208 (YDLEANLAVL…KIKTKNITEK (163 aa)) constitute a PCI domain.

It belongs to the eIF-3 subunit K family. As to quaternary structure, component of the eukaryotic translation initiation factor 3 (eIF-3) complex. The eIF-3 complex interacts with pix.

It is found in the cytoplasm. Functionally, component of the eukaryotic translation initiation factor 3 (eIF-3) complex, which is involved in protein synthesis of a specialized repertoire of mRNAs and, together with other initiation factors, stimulates binding of mRNA and methionyl-tRNAi to the 40S ribosome. The eIF-3 complex specifically targets and initiates translation of a subset of mRNAs involved in cell proliferation. In Drosophila erecta (Fruit fly), this protein is Eukaryotic translation initiation factor 3 subunit K.